A 351-amino-acid chain; its full sequence is Probable NADP-dependent isopropanol dehydrogenase (351 aa).

Zn(2+) contacts are provided by cysteine 37, histidine 59, glutamate 60, and aspartate 150. NADP(+) contacts are provided by residues 175-178, 198-200, 265-267, and lysine 340; these read AGPV, DSR, and VNY.

Belongs to the zinc-containing alcohol dehydrogenase family. Requires Zn(2+) as cofactor.

It carries out the reaction propan-2-ol + NADP(+) = acetone + NADPH + H(+). Its function is as follows. Alcohol dehydrogenase with a preference for medium chain secondary alcohols, such as 2-butanol and isopropanol. Has very low activity with primary alcohols, such as ethanol. Under physiological conditions, the enzyme reduces aldehydes and 2-ketones to produce secondary alcohols. Is also active with acetaldehyde and propionaldehyde. The polypeptide is Probable NADP-dependent isopropanol dehydrogenase (adh) (Mycoplasma pneumoniae (strain ATCC 29342 / M129 / Subtype 1) (Mycoplasmoides pneumoniae)).